The following is a 133-amino-acid chain: MNAPVWWQQLLLAMTGGALGSGLRFAIGASLIQRFGNVFPWGTLTVNLLGSFVAGVLLVWLDARGPSSWPLRALLIVGVIGGLTTFSSLMMECLVFARTDRSTMIGIYLAVTLLAGLALVFAGARTGQWLVTR.

The next 4 helical transmembrane spans lie at 12–32 (LAMTGGALGSGLRFAIGASLI), 41–61 (WGTLTVNLLGSFVAGVLLVWL), 76–96 (IVGVIGGLTTFSSLMMECLVF), and 104–124 (MIGIYLAVTLLAGLALVFAGA). Positions 81 and 84 each coordinate Na(+).

The protein belongs to the fluoride channel Fluc/FEX (TC 1.A.43) family.

Its subcellular location is the cell inner membrane. The enzyme catalyses fluoride(in) = fluoride(out). Its activity is regulated as follows. Na(+) is not transported, but it plays an essential structural role and its presence is essential for fluoride channel function. In terms of biological role, fluoride-specific ion channel. Important for reducing fluoride concentration in the cell, thus reducing its toxicity. The sequence is that of Fluoride-specific ion channel FluC from Xanthomonas axonopodis pv. citri (strain 306).